The following is a 73-amino-acid chain: UPF0435 protein OB1527 (73 aa).

Belongs to the UPF0435 family.

This is UPF0435 protein OB1527 from Oceanobacillus iheyensis (strain DSM 14371 / CIP 107618 / JCM 11309 / KCTC 3954 / HTE831).